We begin with the raw amino-acid sequence, 134 residues long: uncharacterized protein (134 aa).

A helical membrane pass occupies residues 110-130 (SLGVLTDILFLVLYSLLIHLS).

The protein localises to the membrane. This is an uncharacterized protein from Saccharomyces cerevisiae (strain ATCC 204508 / S288c) (Baker's yeast).